The sequence spans 58 residues: Short neurotoxin MS11 (58 aa).

Intrachain disulfides connect C3-C20, C13-C38, C42-C50, and C51-C56.

This sequence belongs to the three-finger toxin family. Short-chain subfamily. As to expression, expressed by the venom gland.

The protein localises to the secreted. Functionally, produces peripheral paralysis by blocking neuromuscular transmission at the postsynaptic site. Binds to and inhibits the endogenous nicotinic acetylcholine receptors (nAChR) in the human rhabdomyosarcoma TE 671 cell line with an IC(50) of 266 mM. Not toxic to mice by intraperitoneal injection or to zebrafish by injection at the back dorsolateral region. The sequence is that of Short neurotoxin MS11 from Micrurus surinamensis (Surinam coral snake).